The following is a 630-amino-acid chain: GTPase-activating protein NEL1 (630 aa).

It belongs to the SEC23/SEC24 family. SEC23 subfamily.

It localises to the cytoplasm. The protein resides in the nucleus. In terms of biological role, acts as a GTPase-activating protein (GAP) for SAR1. Contrary to its SEC23 homolog, NEL1 does not associate with SEC24 and its homologs, nor does it associate with the COPII components, suggesting that it is unlikely that NEL1 functions as a structural component of the vesicle coat machinery. May function as a signaling molecule. The chain is GTPase-activating protein NEL1 from Saccharomyces cerevisiae (strain ATCC 204508 / S288c) (Baker's yeast).